A 415-amino-acid chain; its full sequence is Serine hydroxymethyltransferase (415 aa).

(6S)-5,6,7,8-tetrahydrofolate-binding positions include Leu119 and 123–125 (GHL). Lys228 bears the N6-(pyridoxal phosphate)lysine mark. 353–355 (SAF) contacts (6S)-5,6,7,8-tetrahydrofolate.

Belongs to the SHMT family. Homodimer. Pyridoxal 5'-phosphate serves as cofactor.

The protein localises to the cytoplasm. The catalysed reaction is (6R)-5,10-methylene-5,6,7,8-tetrahydrofolate + glycine + H2O = (6S)-5,6,7,8-tetrahydrofolate + L-serine. Its pathway is one-carbon metabolism; tetrahydrofolate interconversion. The protein operates within amino-acid biosynthesis; glycine biosynthesis; glycine from L-serine: step 1/1. Its function is as follows. Catalyzes the reversible interconversion of serine and glycine with tetrahydrofolate (THF) serving as the one-carbon carrier. Also exhibits THF-independent aldolase activity toward beta-hydroxyamino acids, producing glycine and aldehydes, via a retro-aldol mechanism. This is Serine hydroxymethyltransferase from Haloarcula marismortui (strain ATCC 43049 / DSM 3752 / JCM 8966 / VKM B-1809) (Halobacterium marismortui).